The primary structure comprises 404 residues: Phosphopentomutase (404 aa).

D10, D303, H308, D344, H345, and H356 together coordinate Mn(2+).

Belongs to the phosphopentomutase family. Requires Mn(2+) as cofactor.

It is found in the cytoplasm. It catalyses the reaction 2-deoxy-alpha-D-ribose 1-phosphate = 2-deoxy-D-ribose 5-phosphate. The enzyme catalyses alpha-D-ribose 1-phosphate = D-ribose 5-phosphate. The protein operates within carbohydrate degradation; 2-deoxy-D-ribose 1-phosphate degradation; D-glyceraldehyde 3-phosphate and acetaldehyde from 2-deoxy-alpha-D-ribose 1-phosphate: step 1/2. In terms of biological role, isomerase that catalyzes the conversion of deoxy-ribose 1-phosphate (dRib-1-P) and ribose 1-phosphate (Rib-1-P) to deoxy-ribose 5-phosphate (dRib-5-P) and ribose 5-phosphate (Rib-5-P), respectively. The protein is Phosphopentomutase of Shewanella baltica (strain OS155 / ATCC BAA-1091).